Here is a 297-residue protein sequence, read N- to C-terminus: Taste receptor type 2 member 4 (297 aa).

Over 1 to 11 (MLWELYVFVFA) the chain is Extracellular. The helical transmembrane segment at 12-32 (ASVFLNFVGIIANLFIIVIII) threads the bilayer. Topologically, residues 33 to 46 (KTWVNSRRIASPDR) are cytoplasmic. A helical transmembrane segment spans residues 47–67 (ILFSLAITRFLTLGLFLLNSV). Over 68-80 (YIATNTGRSVYFS) the chain is Extracellular. A helical transmembrane segment spans residues 81–101 (TFFLLCWKFLDANSLWLVTIL). At 102 to 128 (NSLYCVKITNFQHPVFLLLKRTISMKT) the chain is on the cytoplasmic side. Residues 129 to 149 (TSLLLACLLISALTTLLYYML) traverse the membrane as a helical segment. Residues 150–171 (SQISRFPEHIIGRNDTSFDLSD) are Extracellular-facing. A glycan (N-linked (GlcNAc...) asparagine) is linked at N163. Residues 172–192 (GILTLVASLVLNSLLQFMLNV) form a helical membrane-spanning segment. Residues 193–229 (TFASLLIHSLRRHIQKMQRNRTSFWNPQTEAHMGAMR) are Cytoplasmic-facing. A helical transmembrane segment spans residues 230–250 (LMICFLVLYIPYSIATLLYLP). Residues 251 to 260 (SYMRKNLRAQ) are Extracellular-facing. Residues 261-281 (AICMIITAAYPPGHSVLLIIT) form a helical membrane-spanning segment. Over 282–297 (HHKLKAKAKKIFCFYK) the chain is Cytoplasmic.

Belongs to the G-protein coupled receptor T2R family. Expressed in subsets of taste receptor cells of the tongue and palate epithelium and exclusively in gustducin-positive cells. Expressed in 15% taste bud cells in circumvallate and foliate papillae but only in 2% in fungiform papillae.

The protein resides in the membrane. It localises to the cell projection. The protein localises to the cilium membrane. Gustducin-coupled receptor for denatonium and N(6)-propyl-2-thiouracil implicated in the perception of bitter compounds in the oral cavity and the gastrointestinal tract. Signals through PLCB2 and the calcium-regulated cation channel TRPM5. In airway epithelial cells, binding of denatonium increases the intracellular calcium ion concentration and stimulates ciliary beat frequency. The polypeptide is Taste receptor type 2 member 4 (Tas2r4) (Mus musculus (Mouse)).